The following is a 190-amino-acid chain: Small ribosomal subunit protein uS5 (190 aa).

The region spanning 21–84 (FADRLVAINR…EQAKRQMIRV (64 aa)) is the S5 DRBM domain. The disordered stretch occupies residues 156–190 (KKEQSPRSVAQRRGKKVADILPKRDEAPAAEAAEA). Positions 171-182 (KVADILPKRDEA) are enriched in basic and acidic residues.

The protein belongs to the universal ribosomal protein uS5 family. In terms of assembly, part of the 30S ribosomal subunit. Contacts proteins S4 and S8.

With S4 and S12 plays an important role in translational accuracy. In terms of biological role, located at the back of the 30S subunit body where it stabilizes the conformation of the head with respect to the body. This is Small ribosomal subunit protein uS5 from Ruegeria pomeroyi (strain ATCC 700808 / DSM 15171 / DSS-3) (Silicibacter pomeroyi).